We begin with the raw amino-acid sequence, 507 residues long: MFARIVSRRAATGLFAGASSQCKMADRQVHTPLAKVQRHKYTNNENILVDHVEKVDPEVFDIMKNEKKRQRRGLELIASENFTSKAVMDALGSAMCNKYSEGYPGARYYGGNEFIDQMELLCQKRALEVFGLDPAKWGVNVQPLSGSPANFAVYTAIVGSNGRIMGLDLPDGGHLTHGFFTPARKVSATSEFFQSLPYKVDPTTGLIDYDKLEQNAMLFRPKAIIAGVSCYARHLDYERFRKIATKAGAYLMSDMAHISGLVAAGLIPSPFEYSDVVTTTTHKSLRGPRGALIFYRKGVRSTNAKGVDTLYDLEEKINSAVFPGLQGGPHNHTIAGIAVALRQCLSEDFVQYGEQVLKNAKTLAERMKKHGYALATGGTDNHLLLVDLRPIGVEGARAEHVLDLAHIACNKNTCPGDVSALRPGGIRLGTPALTSRGFQEQDFEKVGDFIHEGVQIAKKYNAEAGKTLKDFKSFTETNEPFKKDVADLAKRVEEFSTKFEIPGNETF.

An N6-(pyridoxal phosphate)lysine modification is found at Lys283.

Belongs to the SHMT family. Homotetramer. Pyridoxal 5'-phosphate serves as cofactor.

It carries out the reaction (6R)-5,10-methylene-5,6,7,8-tetrahydrofolate + glycine + H2O = (6S)-5,6,7,8-tetrahydrofolate + L-serine. The protein operates within one-carbon metabolism; tetrahydrofolate interconversion. Interconversion of serine and glycine. The protein is Serine hydroxymethyltransferase (mel-32) of Caenorhabditis elegans.